A 226-amino-acid chain; its full sequence is Enolase-phosphatase E1 (226 aa).

It belongs to the HAD-like hydrolase superfamily. MasA/MtnC family. Monomer. It depends on Mg(2+) as a cofactor.

It catalyses the reaction 5-methylsulfanyl-2,3-dioxopentyl phosphate + H2O = 1,2-dihydroxy-5-(methylsulfanyl)pent-1-en-3-one + phosphate. It participates in amino-acid biosynthesis; L-methionine biosynthesis via salvage pathway; L-methionine from S-methyl-5-thio-alpha-D-ribose 1-phosphate: step 3/6. Its pathway is amino-acid biosynthesis; L-methionine biosynthesis via salvage pathway; L-methionine from S-methyl-5-thio-alpha-D-ribose 1-phosphate: step 4/6. Bifunctional enzyme that catalyzes the enolization of 2,3-diketo-5-methylthiopentyl-1-phosphate (DK-MTP-1-P) into the intermediate 2-hydroxy-3-keto-5-methylthiopentenyl-1-phosphate (HK-MTPenyl-1-P), which is then dephosphorylated to form the acireductone 1,2-dihydroxy-3-keto-5-methylthiopentene (DHK-MTPene). The chain is Enolase-phosphatase E1 from Shewanella baltica (strain OS195).